The following is a 741-amino-acid chain: Fibrinogen alpha chain (741 aa).

The N-terminal stretch at 1 to 18 is a signal peptide; the sequence is MIPVTILCVLLCLNLAWA. Gln19 is modified (pyrrolidone carboxylic acid). The stretch at 67 to 506 forms a coiled coil; the sequence is CCRMQGIIDD…STRRSYNGKD (440 aa). The interval 270-307 is disordered; that stretch reads VAEARGDSSPSHTGKLITSSHRRESPSLVDKTSSASSV. Residues 277-288 show a composition bias toward polar residues; the sequence is SSPSHTGKLITS. Cys310 and Cys341 are joined by a disulfide. Low complexity-rich tracts occupy residues 381–398 and 435–449; these read STSS…HVTG and SASH…SSSS. Residues 381–510 are disordered; it reads STSSRHSIGS…SYNGKDCDDI (130 aa). The span at 450 to 459 shows a compositional bias: polar residues; that stretch reads FNKGGSTFET. A Fibrinogen C-terminal domain is found at 498–739; that stretch reads TRRSYNGKDC…VVRMKIRPLE (242 aa). Residues Asp666, Asp668, Trp670, and Glu672 each coordinate Ca(2+). Cysteines 674 and 687 form a disulfide.

Heterohexamer; disulfide linked. Contains 2 sets of 3 non-identical chains (alpha, beta and gamma). The 2 heterotrimers are in head to head conformation with the N-termini in a small central domain. Conversion of fibrinogen to fibrin is triggered by thrombin, which cleaves fibrinopeptides A and B from alpha and beta chains, and thus exposes the N-terminal polymerization sites responsible for the formation of the soft clot. The soft clot is converted into the hard clot by factor XIIIA which catalyzes the epsilon-(gamma-glutamyl)lysine cross-linking between gamma chains (stronger) and between alpha chains (weaker) of different monomers. In terms of processing, forms F13A-mediated cross-links between a glutamine and the epsilon-amino group of a lysine residue, forming fibronectin-fibrinogen heteropolymers.

The protein resides in the secreted. In terms of biological role, cleaved by the protease thrombin to yield monomers which, together with fibrinogen beta (FGB) and fibrinogen gamma (FGG), polymerize to form an insoluble fibrin matrix. Fibrin has a major function in hemostasis as one of the primary components of blood clots. The protein is Fibrinogen alpha chain (FGA) of Gallus gallus (Chicken).